The sequence spans 317 residues: Probable porphobilinogen deaminase (317 aa).

Cys-234 carries the S-(dipyrrolylmethanemethyl)cysteine modification.

Belongs to the HMBS family. Requires dipyrromethane as cofactor.

The catalysed reaction is 4 porphobilinogen + H2O = hydroxymethylbilane + 4 NH4(+). Its pathway is porphyrin-containing compound metabolism; protoporphyrin-IX biosynthesis; coproporphyrinogen-III from 5-aminolevulinate: step 2/4. Its function is as follows. Tetrapolymerization of the monopyrrole PBG into the hydroxymethylbilane pre-uroporphyrinogen in several discrete steps. This chain is Probable porphobilinogen deaminase, found in Methanosarcina acetivorans (strain ATCC 35395 / DSM 2834 / JCM 12185 / C2A).